The chain runs to 131 residues: Small ribosomal subunit protein uS8 (131 aa).

This sequence belongs to the universal ribosomal protein uS8 family. As to quaternary structure, part of the 30S ribosomal subunit. Contacts proteins S5 and S12.

One of the primary rRNA binding proteins, it binds directly to 16S rRNA central domain where it helps coordinate assembly of the platform of the 30S subunit. This Acinetobacter baylyi (strain ATCC 33305 / BD413 / ADP1) protein is Small ribosomal subunit protein uS8.